Reading from the N-terminus, the 486-residue chain is E3 ubiquitin-protein ligase TRIM58 (486 aa).

The RING-type zinc finger occupies 16 to 61 (CPVCLDFLQEPVSVDCGHSFCLRCISEFCEKSDGAQGGVYACPQCR). A B box-type zinc finger spans residues 91–132 (PGARRCARHGEDLSRFCEEDEAALCWVCDAGPEHRTHRTAPL). Residues Cys-96, His-99, Cys-118, and His-124 each coordinate Zn(2+). A coiled-coil region spans residues 193-242 (LAQEEQRQLRRLEAEERATLQRLRESKSRLVQQSKALKELADELQERCQR). In terms of domain architecture, B30.2/SPRY spans 273-463 (LKTACCIPGR…TPLILPPTTI (191 aa)).

It belongs to the TRIM/RBCC family. As to expression, expressed in erythroblasts.

It catalyses the reaction S-ubiquitinyl-[E2 ubiquitin-conjugating enzyme]-L-cysteine + [acceptor protein]-L-lysine = [E2 ubiquitin-conjugating enzyme]-L-cysteine + N(6)-ubiquitinyl-[acceptor protein]-L-lysine.. It functions in the pathway protein modification; protein ubiquitination. E3 ubiquitin ligase induced during late erythropoiesis. Directly binds and ubiquitinates the intermediate chain of the microtubule motor dynein (DYNC1LI1/DYNC1LI2), stimulating the degradation of the dynein holoprotein complex. May participate in the erythroblast enucleation process through regulation of nuclear polarization. In Homo sapiens (Human), this protein is E3 ubiquitin-protein ligase TRIM58 (TRIM58).